The following is a 39-amino-acid chain: Bomanin Short 3 (39 aa).

The first 18 residues, 1–18 (MKFLSLAFVLGLLALANA), serve as a signal peptide directing secretion. A propeptide spanning residues 19 to 23 (TPLNP) is cleaved from the precursor. A disulfide bridge links Cys-32 with Cys-35.

Belongs to the bomanin family. Hemolymph (at protein level).

It localises to the secreted. In terms of biological role, secreted immune-induced peptide induced by Toll signaling. Has a role in resistance bacterial and fungal infections. The strength of antimicrobial activity appears to correlate with the overall level of expression. Has no activity against the fungus C.glabrata in vitro. This Drosophila melanogaster (Fruit fly) protein is Bomanin Short 3.